The following is a 227-amino-acid chain: Cytochrome c oxidase subunit 2 (227 aa).

Residues 1-14 lie on the Mitochondrial intermembrane side of the membrane; the sequence is MAHPVQLGLQDATS. The helical transmembrane segment at 15–45 threads the bilayer; sequence PVMEELITFHDHALMAMSLISLLVLYALFST. At 46–59 the chain is on the mitochondrial matrix side; the sequence is LTTKLTNTNITDAQ. The chain crosses the membrane as a helical span at residues 60 to 87; the sequence is EMEIIWTILPAIILVLIALPSLRILYLT. Residues 88–227 lie on the Mitochondrial intermembrane side of the membrane; the sequence is DEVNNPSFTI…IFEMGPVFTL (140 aa). His161, Cys196, Glu198, Cys200, His204, and Met207 together coordinate Cu cation. Glu198 serves as a coordination point for Mg(2+).

This sequence belongs to the cytochrome c oxidase subunit 2 family. As to quaternary structure, component of the cytochrome c oxidase (complex IV, CIV), a multisubunit enzyme composed of 14 subunits. The complex is composed of a catalytic core of 3 subunits MT-CO1, MT-CO2 and MT-CO3, encoded in the mitochondrial DNA, and 11 supernumerary subunits COX4I, COX5A, COX5B, COX6A, COX6B, COX6C, COX7A, COX7B, COX7C, COX8 and NDUFA4, which are encoded in the nuclear genome. The complex exists as a monomer or a dimer and forms supercomplexes (SCs) in the inner mitochondrial membrane with NADH-ubiquinone oxidoreductase (complex I, CI) and ubiquinol-cytochrome c oxidoreductase (cytochrome b-c1 complex, complex III, CIII), resulting in different assemblies (supercomplex SCI(1)III(2)IV(1) and megacomplex MCI(2)III(2)IV(2)). Found in a complex with TMEM177, COA6, COX18, COX20, SCO1 and SCO2. Interacts with TMEM177 in a COX20-dependent manner. Interacts with COX20. Interacts with COX16. Cu cation is required as a cofactor.

The protein resides in the mitochondrion inner membrane. It catalyses the reaction 4 Fe(II)-[cytochrome c] + O2 + 8 H(+)(in) = 4 Fe(III)-[cytochrome c] + 2 H2O + 4 H(+)(out). Its function is as follows. Component of the cytochrome c oxidase, the last enzyme in the mitochondrial electron transport chain which drives oxidative phosphorylation. The respiratory chain contains 3 multisubunit complexes succinate dehydrogenase (complex II, CII), ubiquinol-cytochrome c oxidoreductase (cytochrome b-c1 complex, complex III, CIII) and cytochrome c oxidase (complex IV, CIV), that cooperate to transfer electrons derived from NADH and succinate to molecular oxygen, creating an electrochemical gradient over the inner membrane that drives transmembrane transport and the ATP synthase. Cytochrome c oxidase is the component of the respiratory chain that catalyzes the reduction of oxygen to water. Electrons originating from reduced cytochrome c in the intermembrane space (IMS) are transferred via the dinuclear copper A center (CU(A)) of subunit 2 and heme A of subunit 1 to the active site in subunit 1, a binuclear center (BNC) formed by heme A3 and copper B (CU(B)). The BNC reduces molecular oxygen to 2 water molecules using 4 electrons from cytochrome c in the IMS and 4 protons from the mitochondrial matrix. In Cercocebus galeritus (Tana river mangabey), this protein is Cytochrome c oxidase subunit 2 (MT-CO2).